The primary structure comprises 295 residues: Iron-sulfur cluster carrier protein (295 aa).

38–45 (GKGGVGKS) provides a ligand contact to ATP.

The protein belongs to the Mrp/NBP35 ATP-binding proteins family. In terms of assembly, homodimer.

In terms of biological role, binds and transfers iron-sulfur (Fe-S) clusters to target apoproteins. Can hydrolyze ATP. This is Iron-sulfur cluster carrier protein from Pyrococcus furiosus (strain ATCC 43587 / DSM 3638 / JCM 8422 / Vc1).